The sequence spans 1174 residues: Male determiner protein Mdmd(V) (1174 aa).

Basic and acidic residues predominate over residues 1–15; it reads MNATDAESRKPENKP. Disordered stretches follow at residues 1 to 51, 79 to 110, and 136 to 259; these read MNAT…SGQR, RKDG…PVEL, and KQLS…LRRS. Low complexity predominate over residues 16-35; it reads SSESSSSGSTSGSSDGEVSS. Over residues 36–47 the composition is skewed to polar residues; that stretch reads KTYFKNNKSKVL. Residues 79 to 92 are compositionally biased toward basic and acidic residues; that stretch reads RKDGSNEMLPKEDS. Over residues 93-102 the composition is skewed to polar residues; that stretch reads INTNHNYTTD. Positions 138-153 are enriched in low complexity; sequence LSAYRSRSRSTRLSYS. A compositionally biased stretch (basic residues) spans 167–180; that stretch reads SRYKKSVLRSRRTS. The segment covering 183-200 has biased composition (basic and acidic residues); it reads HGRDSSTTKRSVSRDKDN. Residues 201–223 are compositionally biased toward basic residues; sequence RLRRRIGSSRSHTRSHSRFRRSE. Basic and acidic residues predominate over residues 235–259; that stretch reads RSQERRHERRRSMSSDYERIALRRS. The MIF4G domain maps to 348 to 531; it reads KKYIHGYINK…KVLFQVRRDG (184 aa). Residues 597–608 are compositionally biased toward low complexity; sequence DSDGSFGSGSNS. Positions 597–616 are disordered; sequence DSDGSFGSGSNSETALSDCD. The region spanning 641–757 is the MI domain; that stretch reads ALRRTIYLTL…SWDVLDCIKL (117 aa). A compositionally biased stretch (low complexity) spans 840–857; that stretch reads SAPSSSSSSSLSSELSAP. Disordered stretches follow at residues 840 to 1045 and 1095 to 1133; these read SAPS…SRTK and RKDN…NHSR. The segment covering 869-909 has biased composition (basic residues); sequence KKKHKGKNKKMTKKKNPSKKKEKTKKIVGKNKIAAKNKTIK. Residues 910–924 show a composition bias toward basic and acidic residues; it reads RRTDKDNSSSKDNFL. Low complexity predominate over residues 926-957; sequence SESSSNESISLDSLSSELFAPSSYSSSESSND. Residues 963–1001 are compositionally biased toward basic residues; the sequence is KHKGKNKKMTKKKNPSNKREKTKKKLSKNKKAPNKNTKK. Low complexity predominate over residues 1010-1020; it reads SSESSISESKS. Basic residues predominate over residues 1034–1045; the sequence is RKKRVTSKSRTK. The span at 1095 to 1118 shows a compositional bias: basic and acidic residues; it reads RKDNYGNRQNHEISQRHDSEIKRR. Residues 1119 to 1130 are compositionally biased toward basic residues; the sequence is REERKKRHHEKN.

The protein belongs to the CWC22 family. Component of the spliceosome C complex.

It localises to the nucleus speckle. In terms of biological role, male determiner protein (M-factor) that controls male somatic sexual differentiation. Acts as a dominant factor that regulates the mRNA splicing of transformer (tra) and doublesex (dsx) transcripts and promotes expression of male splice forms of tra and dsx. Probably acts as a component of the spliceosome C complex required for mRNA splicing factor and exon-junction complex (EJC) assembly. Hinders eIF4AIII from non-specifically binding RNA and escorts it to the splicing machinery to promote EJC assembly on mature mRNAs. The protein is Male determiner protein Mdmd(V) of Musca domestica (House fly).